The sequence spans 141 residues: Large ribosomal subunit protein uL11 (141 aa).

It belongs to the universal ribosomal protein uL11 family. Part of the ribosomal stalk of the 50S ribosomal subunit. Interacts with L10 and the large rRNA to form the base of the stalk. L10 forms an elongated spine to which L12 dimers bind in a sequential fashion forming a multimeric L10(L12)X complex. In terms of processing, one or more lysine residues are methylated.

In terms of biological role, forms part of the ribosomal stalk which helps the ribosome interact with GTP-bound translation factors. The polypeptide is Large ribosomal subunit protein uL11 (Prochlorococcus marinus (strain MIT 9312)).